The following is a 614-amino-acid chain: Translation initiation factor IF-2 (614 aa).

The tr-type G domain maps to 115–283; it reads ARAPIVTIMG…ILLIAELNNY (169 aa). Positions 124–131 are G1; that stretch reads GHVDHGKT. 124-131 is a GTP binding site; it reads GHVDHGKT. The interval 149-153 is G2; the sequence is GITQH. The tract at residues 170–173 is G3; the sequence is DTPG. Residues 170–174 and 224–227 each bind GTP; these read DTPGH and NKMD. The tract at residues 224 to 227 is G4; sequence NKMD. Residues 260 to 262 are G5; it reads SAL.

The protein belongs to the TRAFAC class translation factor GTPase superfamily. Classic translation factor GTPase family. IF-2 subfamily.

It is found in the cytoplasm. Functionally, one of the essential components for the initiation of protein synthesis. Protects formylmethionyl-tRNA from spontaneous hydrolysis and promotes its binding to the 30S ribosomal subunits. Also involved in the hydrolysis of GTP during the formation of the 70S ribosomal complex. In Ureaplasma parvum serovar 3 (strain ATCC 27815 / 27 / NCTC 11736), this protein is Translation initiation factor IF-2.